The sequence spans 277 residues: UPF0496 protein At3g48650 (277 aa).

2 helical membrane passes run 124–144 and 145–165; these read YIFF…LGAV and SLVV…APLW.

Belongs to the UPF0496 family.

The protein localises to the membrane. This Arabidopsis thaliana (Mouse-ear cress) protein is UPF0496 protein At3g48650.